Here is a 594-residue protein sequence, read N- to C-terminus: Tripeptidyl-peptidase sed4 (594 aa).

A signal peptide spans 1–20 (MLSSTLYAGWLLSLAAPALC). The propeptide at 21-187 (VVQEKLSAVP…AVKLPALPRR (167 aa)) is removed in mature form. N-linked (GlcNAc...) asparagine glycans are attached at residues asparagine 191, asparagine 229, and asparagine 250. Residues 197 to 594 (LITPDCLVEM…MKLKELVLSL (398 aa)) form the Peptidase S53 domain. Catalysis depends on charge relay system residues glutamate 272, aspartate 276, and serine 494. Ca(2+)-binding residues include aspartate 536 and isoleucine 537. Residue asparagine 568 is glycosylated (N-linked (GlcNAc...) asparagine). The Ca(2+) site is built by glycine 572 and aspartate 574.

Ca(2+) serves as cofactor. N-glycosylated.

The protein resides in the secreted. The protein localises to the extracellular space. It carries out the reaction Release of an N-terminal tripeptide from a polypeptide.. Functionally, secreted tripeptidyl-peptidase which degrades proteins at acidic pHs and is involved in virulence. This chain is Tripeptidyl-peptidase sed4 (sed4), found in Aspergillus fumigatus (strain ATCC MYA-4609 / CBS 101355 / FGSC A1100 / Af293) (Neosartorya fumigata).